The primary structure comprises 334 residues: Nucleoid-associated protein ESA_01050 (334 aa).

The protein belongs to the YejK family.

Its subcellular location is the cytoplasm. It is found in the nucleoid. This is Nucleoid-associated protein ESA_01050 from Cronobacter sakazakii (strain ATCC BAA-894) (Enterobacter sakazakii).